Here is a 298-residue protein sequence, read N- to C-terminus: 4-hydroxy-tetrahydrodipicolinate synthase (298 aa).

T51 provides a ligand contact to pyruvate. The Proton donor/acceptor role is filled by Y139. The Schiff-base intermediate with substrate role is filled by K167. I209 contacts pyruvate.

It belongs to the DapA family. As to quaternary structure, homotetramer; dimer of dimers.

It is found in the cytoplasm. It carries out the reaction L-aspartate 4-semialdehyde + pyruvate = (2S,4S)-4-hydroxy-2,3,4,5-tetrahydrodipicolinate + H2O + H(+). It functions in the pathway amino-acid biosynthesis; L-lysine biosynthesis via DAP pathway; (S)-tetrahydrodipicolinate from L-aspartate: step 3/4. Catalyzes the condensation of (S)-aspartate-beta-semialdehyde [(S)-ASA] and pyruvate to 4-hydroxy-tetrahydrodipicolinate (HTPA). This Histophilus somni (strain 2336) (Haemophilus somnus) protein is 4-hydroxy-tetrahydrodipicolinate synthase.